The sequence spans 204 residues: MAGNGSAPDTATHQVRQFDQARAEAAVRELLFAIGENPDRHGLAETPARVARAYREMFAGLYTDPDSVLNTMFDEEHDELVLVKEIPLYSTCEHHLVSFHGVAHVGYIPGNDGRVTGLSKIARLVDLYAKRPQVQERLTSQIADALVKKLNPRGVIVVVEAEHLCMAMRGVRKPGAVTTTSAVRGLFKTNAASRAEALDLILRK.

The Zn(2+) site is built by Cys92, His95, and Cys165.

This sequence belongs to the GTP cyclohydrolase I family. As to quaternary structure, homomer.

The enzyme catalyses GTP + H2O = 7,8-dihydroneopterin 3'-triphosphate + formate + H(+). It participates in cofactor biosynthesis; 7,8-dihydroneopterin triphosphate biosynthesis; 7,8-dihydroneopterin triphosphate from GTP: step 1/1. The chain is GTP cyclohydrolase 1 from Mycobacterium avium (strain 104).